A 260-amino-acid polypeptide reads, in one-letter code: CD40 ligand (260 aa).

Residues 1–22 (MIETYSQPSPRSVATGLPASMK) are Cytoplasmic-facing. Residues 23-46 (IFMYLLTVFLITQMIGSVLFAVYL) form a helical; Signal-anchor for type II membrane protein membrane-spanning segment. Residues 47–260 (HRRLDKVEEE…GFSSFGLLKL (214 aa)) are Extracellular-facing. The THD domain maps to 121 to 260 (IAAHVVSEAN…GFSSFGLLKL (140 aa)). Cys-177 and Cys-217 are disulfide-bonded. Residue Asn-239 is glycosylated (N-linked (GlcNAc...) asparagine).

Belongs to the tumor necrosis factor family. In terms of assembly, homotrimer. Interacts with CD28. CD40 ligand, soluble form: Exists as either a monomer or a homotrimer. Forms a ternary complex between CD40 and integrins for CD40-CD40LG signaling. In terms of processing, the soluble form derives from the membrane form by proteolytic processing. As to expression, specifically expressed on activated CD4+ T-lymphocytes.

Its subcellular location is the cell membrane. The protein resides in the cell surface. It localises to the secreted. Cytokine that acts as a ligand to CD40/TNFRSF5. Costimulates T-cell proliferation and cytokine production. Its cross-linking on T-cells generates a costimulatory signal which enhances the production of IL4 and IL10 in conjunction with the TCR/CD3 ligation and CD28 costimulation. Induces the activation of NF-kappa-B. Induces the activation of kinases MAPK8 and PAK2 in T-cells. Mediates B-cell proliferation in the absence of co-stimulus as well as IgE production in the presence of IL4. Involved in immunoglobulin class switching. Its function is as follows. Acts as a ligand for integrins, specifically ITGA5:ITGB1 and ITGAV:ITGB3; both integrins and the CD40 receptor are required for activation of CD40-CD40LG signaling, which have cell-type dependent effects, such as B-cell activation, NF-kappa-B signaling and anti-apoptotic signaling. The chain is CD40 ligand (Cd40lg) from Mus musculus (Mouse).